We begin with the raw amino-acid sequence, 557 residues long: MAKLLQFNEEALKSILKGVKTLAKAVKVTLGPKGRNVVINKGFGSPLSTKDGVTVAKEVVLKDKFENMGAQLVNQVAAKTSDVAGDGTTTAIVLAEAIYSAGVKNVAAGANPMSLKRGIDQAVETITRSLDHLSTPVNTAQEVRQIATISANNDGEIGRIIGEAMERVGKDGIITVAEAKGIETHVDYVEGMQFDKGYVSPYFITNAEQMSVELSNADILITDKKLSAAKDIIPVLEKIMEKGARPLLIIAEDIDGEALATLVVNKLKAGMTVCAVKAPGFGDRRKAMLQDIAILTGGKVVSEEVGLKLDEVGPEVLGRAKTIKVSKEETTIIDGAGQSNEVKSRLAQIKAELANASTSKYDKEKLEERLAKMVGGVAVVNVGAATETELKEKKARVEDALHATRAAVAQGIVPGGGVALLRAVKSLEKLQLTGDEAIGVTIIKQAAFAPAIAIANNCGKQGNLIAEKIYEATGSYGYDGLTDEFKDLLKAGVIDPVLVTKSALINAASIAGLLLTTAAMITDKPQPKSQPAGMPGMDGMGGMGMGGMGGMGGMGMM.

ATP is bound by residues Thr-29 to Pro-32, Lys-50, Asp-86 to Thr-90, Gly-416, and Asp-495.

It belongs to the chaperonin (HSP60) family. Forms a cylinder of 14 subunits composed of two heptameric rings stacked back-to-back. Interacts with the co-chaperonin GroES.

The protein resides in the cytoplasm. It catalyses the reaction ATP + H2O + a folded polypeptide = ADP + phosphate + an unfolded polypeptide.. Its function is as follows. Together with its co-chaperonin GroES, plays an essential role in assisting protein folding. The GroEL-GroES system forms a nano-cage that allows encapsulation of the non-native substrate proteins and provides a physical environment optimized to promote and accelerate protein folding. The sequence is that of Chaperonin GroEL 1 from Protochlamydia amoebophila (strain UWE25).